Here is a 313-residue protein sequence, read N- to C-terminus: Biotin synthase (313 aa).

The region spanning 28-258 (NFGNDIELCS…LFPQARLRLS (231 aa)) is the Radical SAM core domain. Residues Cys-46, Cys-50, and Cys-53 each contribute to the [4Fe-4S] cluster site. Cys-90, Cys-121, Cys-181, and Arg-256 together coordinate [2Fe-2S] cluster.

The protein belongs to the radical SAM superfamily. Biotin synthase family. As to quaternary structure, homodimer. It depends on [4Fe-4S] cluster as a cofactor. [2Fe-2S] cluster serves as cofactor.

It catalyses the reaction (4R,5S)-dethiobiotin + (sulfur carrier)-SH + 2 reduced [2Fe-2S]-[ferredoxin] + 2 S-adenosyl-L-methionine = (sulfur carrier)-H + biotin + 2 5'-deoxyadenosine + 2 L-methionine + 2 oxidized [2Fe-2S]-[ferredoxin]. Its pathway is cofactor biosynthesis; biotin biosynthesis; biotin from 7,8-diaminononanoate: step 2/2. In terms of biological role, catalyzes the conversion of dethiobiotin (DTB) to biotin by the insertion of a sulfur atom into dethiobiotin via a radical-based mechanism. The protein is Biotin synthase of Francisella tularensis subsp. holarctica (strain FTNF002-00 / FTA).